Consider the following 202-residue polypeptide: Superoxide dismutase [Cu-Zn], chloroplastic (202 aa).

A chloroplast-targeting transit peptide spans 1–48; that stretch reads MASQTLVSPSPLSSHSLLRTSFSGVSVKLAPQFSTLATSNFKPLTVVA. Residues His94, His96, and His111 each contribute to the Cu cation site. A disulfide bond links Cys105 and Cys194. Zn(2+) contacts are provided by His111, His119, His128, and Asp131. Residue His168 coordinates Cu cation.

Belongs to the Cu-Zn superoxide dismutase family. As to quaternary structure, homotetramer. The cofactor is Cu cation. Zn(2+) is required as a cofactor.

It is found in the plastid. It localises to the chloroplast. It catalyses the reaction 2 superoxide + 2 H(+) = H2O2 + O2. Destroys radicals which are normally produced within the cells and which are toxic to biological systems. In Pisum sativum (Garden pea), this protein is Superoxide dismutase [Cu-Zn], chloroplastic (SODCP).